The following is a 569-amino-acid chain: Potassium-transporting ATPase potassium-binding subunit (569 aa).

A run of 10 helical transmembrane segments spans residues 3–23 (LMEY…SPVL), 68–88 (AASL…VLML), 136–156 (VGLA…AVAV), 179–199 (VLYV…GQGV), 259–279 (LQML…GEAV), 284–304 (HAWT…LSLY), 384–404 (GLYG…LMVG), 422–442 (AMLA…VAAV), 490–510 (LALA…GVAG), and 534–554 (LLLT…ALAL).

It belongs to the KdpA family. In terms of assembly, the system is composed of three essential subunits: KdpA, KdpB and KdpC.

The protein localises to the cell inner membrane. Part of the high-affinity ATP-driven potassium transport (or Kdp) system, which catalyzes the hydrolysis of ATP coupled with the electrogenic transport of potassium into the cytoplasm. This subunit binds the periplasmic potassium ions and delivers the ions to the membrane domain of KdpB through an intramembrane tunnel. The chain is Potassium-transporting ATPase potassium-binding subunit from Nitratidesulfovibrio vulgaris (strain DP4) (Desulfovibrio vulgaris).